Here is a 388-residue protein sequence, read N- to C-terminus: Protein SopA (388 aa).

It belongs to the ParA family.

Its function is as follows. This protein is essential for plasmid partition. It ensures the proper distribution of newly replicated plasmids to daughter cells during cell division. SopA is trans-acting. This Escherichia coli O157:H7 protein is Protein SopA (sopA).